Here is a 1048-residue protein sequence, read N- to C-terminus: uncharacterized protein (1048 aa).

A disordered region spans residues 601–629 (ENQINEEQQTNVENEQQTEQQFENEDKET). Residues 605–621 (NEEQQTNVENEQQTEQQ) are compositionally biased toward low complexity.

This is an uncharacterized protein from Methanocaldococcus jannaschii (strain ATCC 43067 / DSM 2661 / JAL-1 / JCM 10045 / NBRC 100440) (Methanococcus jannaschii).